Consider the following 87-residue polypeptide: Small ribosomal subunit protein bS20 (87 aa).

Residues 1–27 (MANIKSAKKRALQSEKRRQHNASRRSM) form a disordered region.

Belongs to the bacterial ribosomal protein bS20 family.

Functionally, binds directly to 16S ribosomal RNA. This is Small ribosomal subunit protein bS20 from Aeromonas hydrophila subsp. hydrophila (strain ATCC 7966 / DSM 30187 / BCRC 13018 / CCUG 14551 / JCM 1027 / KCTC 2358 / NCIMB 9240 / NCTC 8049).